We begin with the raw amino-acid sequence, 246 residues long: Proteasome subunit alpha (246 aa).

The protein belongs to the peptidase T1A family. In terms of assembly, the 20S proteasome core is composed of 14 alpha and 14 beta subunits that assemble into four stacked heptameric rings, resulting in a barrel-shaped structure. The two inner rings, each composed of seven catalytic beta subunits, are sandwiched by two outer rings, each composed of seven alpha subunits. The catalytic chamber with the active sites is on the inside of the barrel. Has a gated structure, the ends of the cylinder being occluded by the N-termini of the alpha-subunits. Is capped by the proteasome-associated ATPase, ARC. Can also interact with the bacterial proteasome activator Bpa through the C-terminal hydrophobic-tyrosine-X motif (HbYX motif) of Bpa; Bpa forms a homooligomeric ring-like structure which stacks co-axially with the proteasomal alpha-rings. In terms of processing, pupylated at an undetermined lysine residue by the prokaryotic ubiquitin-like protein Pup with the help of the ligase PafA, which leads to its degradation by the proteasome and thereby constitutes a negative auto-regulation.

It localises to the cytoplasm. Its pathway is protein degradation; proteasomal Pup-dependent pathway. The formation of the proteasomal ATPase ARC-20S proteasome complex, likely via the docking of the C-termini of ARC into the intersubunit pockets in the alpha-rings, may trigger opening of the gate for substrate entry. Interconversion between the open-gate and close-gate conformations leads to a dynamic regulation of the 20S proteasome proteolysis activity. PPS auto-regulates its own activity via pupylation and degradation of its components. Peptidolytic activity is inhibited by N-acetyl-Leu-Leu-norleucinal (Ac-LLnL) in vitro. Functionally, component of the proteasome core, a large protease complex with broad specificity involved in protein degradation. The M.smegmatis proteasome is able to cleave oligopeptides after hydrophobic residues, thus displaying chymotrypsin-like activity. In complex with the ATPase Mpa, degrades protein targets conjugated to a prokaryotic ubiquitin-like protein (Pup). Identified substrates of the M.smegmatis proteasome are the pupylated SodA and Ino1 proteins. The Pup-proteasome system (PPS) is essential for survival under starvation; PPS likely functions to recycle amino acids under nitrogen starvation, thereby enabling the cell to maintain basal metabolic activities. This Mycolicibacterium smegmatis (strain ATCC 700084 / mc(2)155) (Mycobacterium smegmatis) protein is Proteasome subunit alpha.